The primary structure comprises 261 residues: Putative outer membrane protein TC_0650 (261 aa).

The N-terminal stretch at 1–17 is a signal peptide; the sequence is MRFLFAFILLCSPWVSE.

It is found in the cell outer membrane. This is Putative outer membrane protein TC_0650 from Chlamydia muridarum (strain MoPn / Nigg).